The primary structure comprises 362 residues: Peptide chain release factor 1 (362 aa).

Position 237 is an N5-methylglutamine (glutamine 237).

The protein belongs to the prokaryotic/mitochondrial release factor family. Methylated by PrmC. Methylation increases the termination efficiency of RF1.

It is found in the cytoplasm. Functionally, peptide chain release factor 1 directs the termination of translation in response to the peptide chain termination codons UAG and UAA. In Aquifex aeolicus (strain VF5), this protein is Peptide chain release factor 1 (prfA).